We begin with the raw amino-acid sequence, 639 residues long: 1-deoxy-D-xylulose-5-phosphate synthase (639 aa).

Thiamine diphosphate-binding positions include His-79 and 120–122 (GHS). Asp-151 provides a ligand contact to Mg(2+). Thiamine diphosphate is bound by residues 152 to 153 (GG), Asn-180, Tyr-288, and Glu-370. Position 180 (Asn-180) interacts with Mg(2+).

This sequence belongs to the transketolase family. DXPS subfamily. Homodimer. It depends on Mg(2+) as a cofactor. Requires thiamine diphosphate as cofactor.

The catalysed reaction is D-glyceraldehyde 3-phosphate + pyruvate + H(+) = 1-deoxy-D-xylulose 5-phosphate + CO2. It functions in the pathway metabolic intermediate biosynthesis; 1-deoxy-D-xylulose 5-phosphate biosynthesis; 1-deoxy-D-xylulose 5-phosphate from D-glyceraldehyde 3-phosphate and pyruvate: step 1/1. In terms of biological role, catalyzes the acyloin condensation reaction between C atoms 2 and 3 of pyruvate and glyceraldehyde 3-phosphate to yield 1-deoxy-D-xylulose-5-phosphate (DXP). This chain is 1-deoxy-D-xylulose-5-phosphate synthase, found in Methylococcus capsulatus (strain ATCC 33009 / NCIMB 11132 / Bath).